Consider the following 487-residue polypeptide: MEYEVIIGLEVHVQLNTNSKIFSTATNEFGGSPNTHISPLCVALPGTLPVLNEVVLEKAVRAGVALGCEITKFTKFDRKNYFYPDLPKGYQISQFDKPYATKGGIHVLLKGEKEEKFIPLTRIHMEEDAGKLIHSHDPSINRSYVDYNRAGTPLIEIVSEPDLRSSDEAYVYLNELKTILRYIQVSDCNMEEGSLRCDANVSIRPKGEKGFRTRVEIKNLNSFKAVKQAIDYEVEWQKDVYSRGESFKQMTKLWDATLLKTIPMRSKEMSHDYRYFPEPDLPTIQISDSFIEDIRKTLPELPRQKKERYKTELGLPEYDAEVLTSEREIAEYFEEALVIAGDAKKTSNWVKDEILGIVNKENISIQEFAIDPVRIGKLVKLINSGEITGKIAKTIFEDMLTTKDQPETIVEKNGLKVVRDDKALEEIVIRVIESQPESVEGWKNGKDRVLGAIVGGVMKETKGKADPKLVNELILAKLGPLGEKKKV.

This sequence belongs to the GatB/GatE family. GatB subfamily. In terms of assembly, heterotrimer of A, B and C subunits.

It catalyses the reaction L-glutamyl-tRNA(Gln) + L-glutamine + ATP + H2O = L-glutaminyl-tRNA(Gln) + L-glutamate + ADP + phosphate + H(+). The enzyme catalyses L-aspartyl-tRNA(Asn) + L-glutamine + ATP + H2O = L-asparaginyl-tRNA(Asn) + L-glutamate + ADP + phosphate + 2 H(+). Allows the formation of correctly charged Asn-tRNA(Asn) or Gln-tRNA(Gln) through the transamidation of misacylated Asp-tRNA(Asn) or Glu-tRNA(Gln) in organisms which lack either or both of asparaginyl-tRNA or glutaminyl-tRNA synthetases. The reaction takes place in the presence of glutamine and ATP through an activated phospho-Asp-tRNA(Asn) or phospho-Glu-tRNA(Gln). The protein is Aspartyl/glutamyl-tRNA(Asn/Gln) amidotransferase subunit B of Leptospira biflexa serovar Patoc (strain Patoc 1 / Ames).